Here is a 160-residue protein sequence, read N- to C-terminus: Sec-independent protein translocase protein TatB (160 aa).

Residues 1 to 21 (MFGMGFFEILVVLVVAIIFLG) traverse the membrane as a helical segment. Residues 118–160 (HLNEEVSNEEALNKEVSSDESPKEVQLATDNNTKEHDKEKENV) form a disordered region. Basic and acidic residues-rich tracts occupy residues 128-140 (ALNK…ESPK) and 149-160 (NTKEHDKEKENV).

The protein belongs to the TatB family. As to quaternary structure, the Tat system comprises two distinct complexes: a TatABC complex, containing multiple copies of TatA, TatB and TatC subunits, and a separate TatA complex, containing only TatA subunits. Substrates initially bind to the TatABC complex, which probably triggers association of the separate TatA complex to form the active translocon.

The protein localises to the cell inner membrane. Functionally, part of the twin-arginine translocation (Tat) system that transports large folded proteins containing a characteristic twin-arginine motif in their signal peptide across membranes. Together with TatC, TatB is part of a receptor directly interacting with Tat signal peptides. TatB may form an oligomeric binding site that transiently accommodates folded Tat precursor proteins before their translocation. The chain is Sec-independent protein translocase protein TatB from Helicobacter pylori (strain ATCC 700392 / 26695) (Campylobacter pylori).